A 223-amino-acid chain; its full sequence is uncharacterized protein (223 aa).

5 consecutive transmembrane segments (helical) span residues 28–48 (LSNT…GLIT), 59–79 (LIVQ…ITLA), 88–108 (AFNQ…MFFI), 128–148 (IVGL…VWLS), and 176–196 (AWAI…YMIV).

The protein resides in the cell membrane. This is an uncharacterized protein from Mycoplasma pneumoniae (strain ATCC 29342 / M129 / Subtype 1) (Mycoplasmoides pneumoniae).